Reading from the N-terminus, the 309-residue chain is 4-hydroxy-3-methylbut-2-enyl diphosphate reductase (309 aa).

Cys13 is a [4Fe-4S] cluster binding site. 2 residues coordinate (2E)-4-hydroxy-3-methylbut-2-enyl diphosphate: His42 and His75. Dimethylallyl diphosphate-binding residues include His42 and His75. Positions 42 and 75 each coordinate isopentenyl diphosphate. Cys97 contacts [4Fe-4S] cluster. (2E)-4-hydroxy-3-methylbut-2-enyl diphosphate is bound at residue His125. Position 125 (His125) interacts with dimethylallyl diphosphate. His125 is an isopentenyl diphosphate binding site. Glu127 (proton donor) is an active-site residue. Residue Thr165 coordinates (2E)-4-hydroxy-3-methylbut-2-enyl diphosphate. Position 195 (Cys195) interacts with [4Fe-4S] cluster. The (2E)-4-hydroxy-3-methylbut-2-enyl diphosphate site is built by Ser223, Ser224, Asn225, and Ser267. Residues Ser223, Ser224, Asn225, and Ser267 each contribute to the dimethylallyl diphosphate site. Isopentenyl diphosphate contacts are provided by Ser223, Ser224, Asn225, and Ser267.

The protein belongs to the IspH family. It depends on [4Fe-4S] cluster as a cofactor.

It carries out the reaction isopentenyl diphosphate + 2 oxidized [2Fe-2S]-[ferredoxin] + H2O = (2E)-4-hydroxy-3-methylbut-2-enyl diphosphate + 2 reduced [2Fe-2S]-[ferredoxin] + 2 H(+). The catalysed reaction is dimethylallyl diphosphate + 2 oxidized [2Fe-2S]-[ferredoxin] + H2O = (2E)-4-hydroxy-3-methylbut-2-enyl diphosphate + 2 reduced [2Fe-2S]-[ferredoxin] + 2 H(+). Its pathway is isoprenoid biosynthesis; dimethylallyl diphosphate biosynthesis; dimethylallyl diphosphate from (2E)-4-hydroxy-3-methylbutenyl diphosphate: step 1/1. It participates in isoprenoid biosynthesis; isopentenyl diphosphate biosynthesis via DXP pathway; isopentenyl diphosphate from 1-deoxy-D-xylulose 5-phosphate: step 6/6. Functionally, catalyzes the conversion of 1-hydroxy-2-methyl-2-(E)-butenyl 4-diphosphate (HMBPP) into a mixture of isopentenyl diphosphate (IPP) and dimethylallyl diphosphate (DMAPP). Acts in the terminal step of the DOXP/MEP pathway for isoprenoid precursor biosynthesis. The chain is 4-hydroxy-3-methylbut-2-enyl diphosphate reductase from Chlamydia caviae (strain ATCC VR-813 / DSM 19441 / 03DC25 / GPIC) (Chlamydophila caviae).